A 495-amino-acid polypeptide reads, in one-letter code: L-2,4-diaminobutyrate decarboxylase (495 aa).

K312 is modified (N6-(pyridoxal phosphate)lysine).

Belongs to the group II decarboxylase family. Pyridoxal 5'-phosphate serves as cofactor.

The enzyme catalyses L-2,4-diaminobutanoate + H(+) = propane-1,3-diamine + CO2. Its pathway is siderophore biosynthesis; rhizobactin biosynthesis. This is L-2,4-diaminobutyrate decarboxylase (rhbB) from Rhizobium meliloti (strain 1021) (Ensifer meliloti).